We begin with the raw amino-acid sequence, 166 residues long: Eukaryotic translation initiation factor 5A (166 aa).

Positions 1 to 21 are disordered; sequence MSDEDHDFSHQGGGDNASKTY. Residue Lys-53 is modified to Hypusine. Residues 101–121 form a disordered region; sequence EDPSLPSHLSLMDDEGESRED. Positions 112-121 are enriched in acidic residues; the sequence is MDDEGESRED.

The protein belongs to the eIF-5A family. Lys-53 undergoes hypusination, a unique post-translational modification that consists in the addition of a butylamino group from spermidine to lysine side chain, leading to the formation of the unusual amino acid hypusine. eIF-5As are the only known proteins to undergo this modification, which is essential for their function.

The protein localises to the cytoplasm. Its function is as follows. Translation factor that promotes translation elongation and termination, particularly upon ribosome stalling at specific amino acid sequence contexts. Binds between the exit (E) and peptidyl (P) site of the ribosome and promotes rescue of stalled ribosome: specifically required for efficient translation of polyproline-containing peptides as well as other motifs that stall the ribosome. Acts as a ribosome quality control (RQC) cofactor by joining the RQC complex to facilitate peptidyl transfer during CAT tailing step. The chain is Eukaryotic translation initiation factor 5A from Leishmania donovani.